The chain runs to 150 residues: Allograft inflammatory factor 1-like (150 aa).

Ser2 bears the N-acetylserine mark. Ser2 bears the Phosphoserine mark. In terms of domain architecture, EF-hand 1 spans 47-82 (EKLAAFKEKYMEFDLNNEGEIDLMSLKRMMEKLGVP). Asp60, Asn62, Glu64, and Glu66 together coordinate Ca(2+). One can recognise an EF-hand 2; degenerate domain in the interval 83 to 117 (KTHLEMKKMISEVTGGVSDTISYRDFVNMMLGKRS). A disordered region spans residues 129–150 (KANESSPKPAGPPPERDIASLP). At Ser134 the chain carries Phosphoserine.

In terms of assembly, homodimer (Potential). Monomer.

The protein resides in the cytoplasm. It localises to the cytoskeleton. Its subcellular location is the cell projection. The protein localises to the ruffle membrane. In terms of biological role, actin-binding protein that promotes actin bundling. May neither bind calcium nor depend on calcium for function. This Mus musculus (Mouse) protein is Allograft inflammatory factor 1-like (Aif1l).